The primary structure comprises 100 residues: Large ribosomal subunit protein uL23 (100 aa).

It belongs to the universal ribosomal protein uL23 family. In terms of assembly, part of the 50S ribosomal subunit. Contacts protein L29, and trigger factor when it is bound to the ribosome.

In terms of biological role, one of the early assembly proteins it binds 23S rRNA. One of the proteins that surrounds the polypeptide exit tunnel on the outside of the ribosome. Forms the main docking site for trigger factor binding to the ribosome. This Shewanella pealeana (strain ATCC 700345 / ANG-SQ1) protein is Large ribosomal subunit protein uL23.